A 297-amino-acid polypeptide reads, in one-letter code: HTH-type transcriptional regulator ArgP (297 aa).

The HTH lysR-type domain occupies 4-60 (PDYRTLQALDAVIRERGFERAAQKLCITQSAVSQRIKQLENMFGQPLLVRTVPPRPT). The segment at residues 21 to 40 (FERAAQKLCITQSAVSQRIK) is a DNA-binding region (H-T-H motif).

It belongs to the LysR transcriptional regulatory family. As to quaternary structure, homodimer.

Controls the transcription of genes involved in arginine and lysine metabolism. The protein is HTH-type transcriptional regulator ArgP of Escherichia coli O7:K1 (strain IAI39 / ExPEC).